The primary structure comprises 383 residues: MYFLVADHREHHVIPFLKTDFHHMHQNPIQKNQALLEIKQLFTGDYLICKSPSTILACIERKTYKDFAASLKDGRYQNRQKMLLLREQTKCQLYFFVEGPAFPNPQKKINHVAYASIITAMTHLMVRDHIFIIQTKNEAHSSQKLMQLFYAFSKEMVCVVPTSLTPTDEELCIKLWSSLSGISGVIGKIMANTCSVAHLVSGKLPSQNIDQLKTPSNRPFPKKVKRMLINISKGNKELEIKLLSGVPNIGKKLAAEILKDHALLFFLNQPVECLANIQIIQKTRTIKLGMKRAEAIHYFLNWCGSARVTVDSQNITEASRPIMQPATMQLATTQPLHKVSDEASENASHDASENASDKVSSPTGHQTISKYISKEISLNTAAK.

The ERCC4 domain occupies 3–101; that stretch reads FLVADHREHH…QLYFFVEGPA (99 aa). The interval 336–367 is disordered; that stretch reads LHKVSDEASENASHDASENASDKVSSPTGHQT. A compositionally biased stretch (basic and acidic residues) spans 347–356; it reads ASHDASENAS. A compositionally biased stretch (polar residues) spans 357–367; that stretch reads DKVSSPTGHQT.

Belongs to the asfivirus EP364R family.

Functionally, plays a role in the inhibition of type I interferon signaling pathway. Mechanistically, specifically interacts with 2',3'-cGAMP and cleaves it via its phosphodiesterase activity. In turn, prevents 2',3'-cGAMP interaction with host ER-resident STING1 leading to inhibition of downstream signaling pathway and type I interferon production. The chain is ERCC4 domain-containing protein EP364R from Ornithodoros (relapsing fever ticks).